The following is a 521-amino-acid chain: Phospholipase C B (521 aa).

The tat-type signal signal peptide spans 1 to 39 (MGSEHPVDGMTRRQFFAKAAAATTAGAFMSLAGPIIEKA). Residues 501-521 (FPQSMPTQETAPTRGIPSGLC) are disordered.

Belongs to the bacterial phospholipase C family. Predicted to be exported by the Tat system. The position of the signal peptide cleavage has not been experimentally proven.

The protein resides in the secreted. The protein localises to the cell wall. It catalyses the reaction a 1,2-diacyl-sn-glycero-3-phosphocholine + H2O = phosphocholine + a 1,2-diacyl-sn-glycerol + H(+). Functionally, involved in virulence. Induces cytotoxic effects on mouse macrophage cell lines, via direct or indirect enzymatic hydrolysis of cell membrane phospholipids. Hydrolyzes phosphatidylcholine. This chain is Phospholipase C B, found in Mycobacterium tuberculosis (strain CDC 1551 / Oshkosh).